Reading from the N-terminus, the 400-residue chain is EARP-interacting protein homolog (400 aa).

Residues Asn95 to Asn114 are disordered. Positions Asn96–Asn114 are enriched in low complexity. WD repeat units follow at residues Gly138–Thr178, Ala227–Lys267, and Gly271–Asn311. Residues Asn314–Pro333 show a composition bias toward low complexity. The disordered stretch occupies residues Asn314–Asn348. The stretch at Glu358–Leu397 is one WD 4 repeat.

This sequence belongs to the WD repeat EIPR1 family.

This chain is EARP-interacting protein homolog, found in Dictyostelium discoideum (Social amoeba).